A 313-amino-acid polypeptide reads, in one-letter code: MERINSTLLTAFILTGIPYPLRLRTLFFVFFFLIYILTQLGNLLILITVWADPRLHARPMYIFLGVLSVIDMSISSIIVPRLMMNFTLGVKPIPFGGCVAQLYFYHFLGSTQCFLYTLMAYDRYLAICQPLRYPVLMTAKLSALLVAGAWMAGSIHGALQAILTFRLPYCGPNQVDYFFCDIPAVLRLACADTTVNELVTFVDIGVVVASCFSLILLSYIQIIQAILRIHTADGRRRAFSTCGAHVTVVTVYYVPCAFIYLRPETNSPLDGAAALVPTAITPFLNPLIYTLRNQEVKLALKRMLRSPRTPSEV.

At 1–25 the chain is on the extracellular side; the sequence is MERINSTLLTAFILTGIPYPLRLRT. Asn5 carries an N-linked (GlcNAc...) asparagine glycan. The chain crosses the membrane as a helical span at residues 26–46; sequence LFFVFFFLIYILTQLGNLLIL. Residues 47–54 lie on the Cytoplasmic side of the membrane; the sequence is ITVWADPR. Residues 55-76 traverse the membrane as a helical segment; sequence LHARPMYIFLGVLSVIDMSISS. The Extracellular segment spans residues 77-100; that stretch reads IIVPRLMMNFTLGVKPIPFGGCVA. N-linked (GlcNAc...) asparagine glycosylation is present at Asn85. Cys98 and Cys190 are oxidised to a cystine. The helical transmembrane segment at 101–121 threads the bilayer; that stretch reads QLYFYHFLGSTQCFLYTLMAY. The Cytoplasmic portion of the chain corresponds to 122–140; that stretch reads DRYLAICQPLRYPVLMTAK. The chain crosses the membrane as a helical span at residues 141–161; that stretch reads LSALLVAGAWMAGSIHGALQA. At 162–198 the chain is on the extracellular side; sequence ILTFRLPYCGPNQVDYFFCDIPAVLRLACADTTVNEL. Residues 199–218 form a helical membrane-spanning segment; that stretch reads VTFVDIGVVVASCFSLILLS. At 219-238 the chain is on the cytoplasmic side; it reads YIQIIQAILRIHTADGRRRA. Residues 239 to 259 form a helical membrane-spanning segment; that stretch reads FSTCGAHVTVVTVYYVPCAFI. At 260–270 the chain is on the extracellular side; sequence YLRPETNSPLD. A helical transmembrane segment spans residues 271–291; it reads GAAALVPTAITPFLNPLIYTL. Over 292-313 the chain is Cytoplasmic; that stretch reads RNQEVKLALKRMLRSPRTPSEV.

The protein belongs to the G-protein coupled receptor 1 family.

It is found in the cell membrane. In terms of biological role, odorant receptor. The sequence is that of Olfactory receptor 10G3 (OR10G3) from Homo sapiens (Human).